The sequence spans 47 residues: PhoP/PhoQ regulator MgrB (47 aa).

A helical transmembrane segment spans residues 6-26; the sequence is WVALVVVVLACLLLWAQVFNM.

It belongs to the MgrB family. In terms of assembly, may form homooligomers. Probably interacts with the periplasmic domain of PhoQ.

The protein resides in the cell inner membrane. Its function is as follows. PhoP-regulated transcription is redox-sensitive, being activated when the periplasm becomes more reducing. MgrB acts between DsbA/DsbB and PhoP/PhoQ in this pathway. Represses PhoP/PhoQ signaling, possibly by binding to the periplasmic domain of PhoQ, altering its activity and that of downstream effector PhoP. This chain is PhoP/PhoQ regulator MgrB, found in Escherichia coli O1:K1 / APEC.